We begin with the raw amino-acid sequence, 110 residues long: Plasma membrane ATPase (110 aa).

The Mg(2+) site is built by Asp-72 and Asp-76. The interval 88–110 is disordered; that stretch reads APESTSLNLPNDKELSEIAEQAK. Over residues 98 to 110 the composition is skewed to basic and acidic residues; it reads NDKELSEIAEQAK.

The protein belongs to the cation transport ATPase (P-type) (TC 3.A.3) family. Type IIIA subfamily. The N-terminus is blocked.

Its subcellular location is the cell membrane. It catalyses the reaction ATP + H2O + H(+)(in) = ADP + phosphate + 2 H(+)(out). Its function is as follows. The plasma membrane ATPase of plants and fungi is a hydrogen ion pump. The proton gradient it generates drives the active transport of nutrients by H(+)-symport. The resulting external acidification and/or internal alkinization may mediate growth responses. The sequence is that of Plasma membrane ATPase from Avena sativa (Oat).